The following is a 194-amino-acid chain: dCTP deaminase (194 aa).

DCTP is bound by residues 110–115 (RSSLAR), D128, 136–138 (VLE), Y171, K178, and Q182. E138 acts as the Proton donor/acceptor in catalysis. Residues 171 to 194 (YNKRKNAKYKDQQEAVASRISQDS) are disordered.

This sequence belongs to the dCTP deaminase family. Homotrimer.

It carries out the reaction dCTP + H2O + H(+) = dUTP + NH4(+). It functions in the pathway pyrimidine metabolism; dUMP biosynthesis; dUMP from dCTP (dUTP route): step 1/2. Its function is as follows. Catalyzes the deamination of dCTP to dUTP. The sequence is that of dCTP deaminase from Shewanella amazonensis (strain ATCC BAA-1098 / SB2B).